Here is a 63-residue protein sequence, read N- to C-terminus: Large ribosomal subunit protein uL30 (63 aa).

The protein belongs to the universal ribosomal protein uL30 family. In terms of assembly, part of the 50S ribosomal subunit.

The chain is Large ribosomal subunit protein uL30 from Rickettsia typhi (strain ATCC VR-144 / Wilmington).